A 272-amino-acid polypeptide reads, in one-letter code: ATP synthase subunit a (272 aa).

6 consecutive transmembrane segments (helical) span residues 41–61, 110–130, 143–165, 188–208, 222–242, and 243–263; these read VLNI…LSIF, FVWV…FPFI, VPSA…ILFY, VFFI…PISL, IFIL…NVPW, and AIFH…LTIV.

This sequence belongs to the ATPase A chain family. F-type ATPases have 2 components, CF(1) - the catalytic core - and CF(0) - the membrane proton channel. CF(1) has five subunits: alpha(3), beta(3), gamma(1), delta(1), epsilon(1). CF(0) has three main subunits: a(1), b(2) and c(9-12). The alpha and beta chains form an alternating ring which encloses part of the gamma chain. CF(1) is attached to CF(0) by a central stalk formed by the gamma and epsilon chains, while a peripheral stalk is formed by the delta and b chains.

It localises to the cell membrane. Key component of the proton channel; it plays a direct role in the translocation of protons across the membrane. The polypeptide is ATP synthase subunit a (Buchnera aphidicola subsp. Schizaphis graminum (strain Sg)).